The primary structure comprises 157 residues: MPQIIEAGLSAQGKKFGIIAARFNDFITERLVGGALDALTRSGAADGDITLLKVPGAFEIPLAAKKMAMTGKFDAIICLGAVIRGATNHYDYVCAEVSKGIACVSLDHGLPVMFGILTTESIEQAIERAGTKAGNKGFDTALAAIEMANLMTVMGEA.

5-amino-6-(D-ribitylamino)uracil is bound by residues Phe23, 57–59 (AFE), and 81–83 (AVI). Residue 86 to 87 (AT) coordinates (2S)-2-hydroxy-3-oxobutyl phosphate. Catalysis depends on His89, which acts as the Proton donor. Phe114 is a binding site for 5-amino-6-(D-ribitylamino)uracil. Residue Arg128 coordinates (2S)-2-hydroxy-3-oxobutyl phosphate.

The protein belongs to the DMRL synthase family.

It catalyses the reaction (2S)-2-hydroxy-3-oxobutyl phosphate + 5-amino-6-(D-ribitylamino)uracil = 6,7-dimethyl-8-(1-D-ribityl)lumazine + phosphate + 2 H2O + H(+). Its pathway is cofactor biosynthesis; riboflavin biosynthesis; riboflavin from 2-hydroxy-3-oxobutyl phosphate and 5-amino-6-(D-ribitylamino)uracil: step 1/2. Its function is as follows. Catalyzes the formation of 6,7-dimethyl-8-ribityllumazine by condensation of 5-amino-6-(D-ribitylamino)uracil with 3,4-dihydroxy-2-butanone 4-phosphate. This is the penultimate step in the biosynthesis of riboflavin. The protein is 6,7-dimethyl-8-ribityllumazine synthase of Desulforapulum autotrophicum (strain ATCC 43914 / DSM 3382 / VKM B-1955 / HRM2) (Desulfobacterium autotrophicum).